Consider the following 682-residue polypeptide: E3 ubiquitin-protein ligase RNF103 (682 aa).

The next 4 membrane-spanning stretches (helical) occupy residues F6–V26, L326–Q346, L366–F386, and M411–I431. Over residues E525 to N542 the composition is skewed to acidic residues. Residues E525–S549 form a disordered region. An RING-type zinc finger spans residues C618–R660.

Interacts with DERL1 and VCP. In terms of tissue distribution, expressed in different tissues including hippocampus, cerebral cortex, heart, kidney, spleen and lung. Expression is increased in hippocampus and frontal cortex after chronic treatment with antidepressants.

It localises to the endoplasmic reticulum membrane. The catalysed reaction is S-ubiquitinyl-[E2 ubiquitin-conjugating enzyme]-L-cysteine + [acceptor protein]-L-lysine = [E2 ubiquitin-conjugating enzyme]-L-cysteine + N(6)-ubiquitinyl-[acceptor protein]-L-lysine.. It functions in the pathway protein modification; protein ubiquitination. Its function is as follows. Acts as an E2-dependent E3 ubiquitin-protein ligase, probably involved in the ER-associated protein degradation pathway. The protein is E3 ubiquitin-protein ligase RNF103 (Rnf103) of Rattus norvegicus (Rat).